The primary structure comprises 145 residues: Large ribosomal subunit protein uL15 (145 aa).

The span at 1-13 shows a compositional bias: basic and acidic residues; that stretch reads MNLHELKYNEGAR. Residues 1–56 form a disordered region; sequence MNLHELKYNEGARKEKHRVGRGHAAGKGKQAGKGQSGQLKRTGSKPGFEGGQNPWY. Positions 14–26 are enriched in basic residues; sequence KEKHRVGRGHAAG.

This sequence belongs to the universal ribosomal protein uL15 family. As to quaternary structure, part of the 50S ribosomal subunit.

Binds to the 23S rRNA. The protein is Large ribosomal subunit protein uL15 of Mycoplasma mobile (strain ATCC 43663 / 163K / NCTC 11711) (Mesomycoplasma mobile).